Reading from the N-terminus, the 209-residue chain is MAKTHEIKVERRADEGKGASRRLRHAGVIPAIVYGGELEPVSIQLNHEQIWLAQQNEWFYSSILDLNLNGDVQQVLLRDMQRHPFKQLIMHIDFQRVSANEKLSASVPLHFINEAISPAGKSSEVVVTHELNEVQVVCLPKDLPEFIEIDLSTLEVGAVIHLSEITLPAGVEIPELKLGKEHDVAVVIAKHGQVEADDVADEAAEGDAK.

The protein belongs to the bacterial ribosomal protein bL25 family. CTC subfamily. In terms of assembly, part of the 50S ribosomal subunit; part of the 5S rRNA/L5/L18/L25 subcomplex. Contacts the 5S rRNA. Binds to the 5S rRNA independently of L5 and L18.

In terms of biological role, this is one of the proteins that binds to the 5S RNA in the ribosome where it forms part of the central protuberance. This chain is Large ribosomal subunit protein bL25, found in Xanthomonas campestris pv. campestris (strain 8004).